A 241-amino-acid polypeptide reads, in one-letter code: Homeobox protein TGIF2LX (241 aa).

Disordered stretches follow at residues 1–58 and 126–209; these read MEAA…GNLP and TGKD…VSPE. The segment covering 21–39 has biased composition (polar residues); it reads AKTQSPAQDTSIMSRNNAD. The segment at residues 48 to 111 is a DNA-binding region (homeobox; TALE-type); the sequence is EHKKKRKGNL…INARRRILPD (64 aa).

Belongs to the TALE/TGIF homeobox family.

The protein localises to the nucleus. Functionally, may have a transcription role in testis. This Gorilla gorilla gorilla (Western lowland gorilla) protein is Homeobox protein TGIF2LX (TGIF2LX).